Consider the following 195-residue polypeptide: Imidazoleglycerol-phosphate dehydratase (195 aa).

It belongs to the imidazoleglycerol-phosphate dehydratase family.

Its subcellular location is the cytoplasm. It catalyses the reaction D-erythro-1-(imidazol-4-yl)glycerol 3-phosphate = 3-(imidazol-4-yl)-2-oxopropyl phosphate + H2O. It functions in the pathway amino-acid biosynthesis; L-histidine biosynthesis; L-histidine from 5-phospho-alpha-D-ribose 1-diphosphate: step 6/9. This chain is Imidazoleglycerol-phosphate dehydratase, found in Aminomonas aminovorus.